The primary structure comprises 393 residues: CCCH-type zinc finger protein oma-2 (393 aa).

Residues 1–26 (MDMLKENVIQNNEARTESSVEPSHPD) are disordered. The segment covering 14–26 (ARTESSVEPSHPD) has biased composition (basic and acidic residues). 2 consecutive C3H1-type zinc fingers follow at residues 105-133 (SYKTVICQAWLESKTCAFAENCRFAHGEE) and 147-175 (KYRTKLCDKYTTTGLCPYGKRCLFIHPDN). Disordered regions lie at residues 227–251 (TPDEPAANMPLGPTPVSIRGPRYEL) and 311–340 (KQSTPGGVSGYSSSGSTPSQDSDSSPLTAA). The span at 313 to 340 (STPGGVSGYSSSGSTPSQDSDSSPLTAA) shows a compositional bias: low complexity. Thr327 is subject to Phosphothreonine; by GSK3.

In terms of tissue distribution, exclusively expressed in the hermaphrodite gonad. Expression only in cellulized oocytes. Widely distributed throughout gonadal oocytes from the mitotic stage to the developing diakinesis stage.

The protein localises to the cytoplasm. The protein resides in the cytoplasmic granule. It is found in the cytoskeleton. It localises to the microtubule organizing center. Its subcellular location is the centrosome. Its function is as follows. Zinc-finger RNA-binding protein that binds to 5'-UA[AU]-3' motifs in the 3'-UTR of maternal mRNAs to suppress translation in oocytes and embryos. Acts redundantly with oma-1 to control the temporal expression and distribution of maternal proteins and thereby promote meiotic progression, oocyte maturation, fertilization and embryonic development. Also, together with oma-1, is involved in P-granule distribution during embryonic development. This is CCCH-type zinc finger protein oma-2 from Caenorhabditis elegans.